A 139-amino-acid polypeptide reads, in one-letter code: Ribulose bisphosphate carboxylase small subunit (139 aa).

Belongs to the RuBisCO small chain family. Heterohexadecamer of 8 large and 8 small subunits.

Its subcellular location is the plastid. It is found in the chloroplast. Functionally, ruBisCO catalyzes two reactions: the carboxylation of D-ribulose 1,5-bisphosphate, the primary event in carbon dioxide fixation, as well as the oxidative fragmentation of the pentose substrate in the photorespiration process. Both reactions occur simultaneously and in competition at the same active site. Although the small subunit is not catalytic it is essential for maximal activity. The sequence is that of Ribulose bisphosphate carboxylase small subunit from Cylindrotheca sp. (strain N1) (Marine diatom).